The primary structure comprises 295 residues: uncharacterized protein (295 aa).

The span at 1-13 shows a compositional bias: basic residues; sequence MRHSVARPTRLPR. Disordered stretches follow at residues 1–111 and 183–295; these read MRHS…AGLS and TSAF…PRDS. A compositionally biased stretch (low complexity) spans 57–67; that stretch reads AGPSAGAAARP. The segment covering 68 to 77 has biased composition (pro residues); the sequence is AAPPPQPREP. Basic and acidic residues-rich tracts occupy residues 245–257 and 280–295; these read LRPKGARADDRRP and GEPHKAGEVGNHPRDS.

This is an uncharacterized protein from Homo sapiens (Human).